The primary structure comprises 268 residues: Cyclohexadienyl dehydratase (268 aa).

An N-terminal signal peptide occupies residues 1–25 (MPKSFRHLVQALACLALLASASLQA).

The protein belongs to the bacterial solute-binding protein 3 family. Homodimer.

The protein resides in the periplasm. It carries out the reaction prephenate + H(+) = 3-phenylpyruvate + CO2 + H2O. The catalysed reaction is L-arogenate + H(+) = L-phenylalanine + CO2 + H2O. It functions in the pathway amino-acid biosynthesis; L-phenylalanine biosynthesis; L-phenylalanine from L-arogenate: step 1/1. It participates in amino-acid biosynthesis; L-phenylalanine biosynthesis; phenylpyruvate from prephenate: step 1/1. Functionally, forms alternative pathway for phenylalanine biosynthesis. Can catalyze two reactions: prephenate dehydratase and arogenate dehydratase. May have a role in chemotaxis or transport. The sequence is that of Cyclohexadienyl dehydratase (pheC) from Pseudomonas aeruginosa (strain ATCC 15692 / DSM 22644 / CIP 104116 / JCM 14847 / LMG 12228 / 1C / PRS 101 / PAO1).